The sequence spans 406 residues: 5-cytosine rRNA methyltransferase NSUN4 (406 aa).

S-adenosyl-L-methionine-binding residues include G207, G208, K209, D226, R231, D259, G260, and D277. Residue C332 is the Nucleophile of the active site.

It belongs to the class I-like SAM-binding methyltransferase superfamily. RsmB/NOP family.

The protein resides in the mitochondrion. The catalysed reaction is a cytidine in rRNA + S-adenosyl-L-methionine = a 5-methylcytidine in rRNA + S-adenosyl-L-homocysteine + H(+). It carries out the reaction a cytidine in mRNA + S-adenosyl-L-methionine = a 5-methylcytidine in mRNA + S-adenosyl-L-homocysteine + H(+). Involved in mitochondrial ribosome large subunit biogenesis. Its function is as follows. Mitochondrial RNA cytosine C(5)-methyltransferase that methylates cytosine to 5-methylcytosine (m5C) in various RNAs, such as rRNAs, mRNAs and some long non-coding RNAs (lncRNAs). Involved in mitochondrial ribosome small subunit (SSU) maturation by catalyzing methylation of mitochondrial 12S rRNA. This chain is 5-cytosine rRNA methyltransferase NSUN4 (nsun4), found in Xenopus tropicalis (Western clawed frog).